A 500-amino-acid chain; its full sequence is Aspartyl/glutamyl-tRNA(Asn/Gln) amidotransferase subunit B (500 aa).

The protein belongs to the GatB/GatE family. GatB subfamily. In terms of assembly, heterotrimer of A, B and C subunits.

It catalyses the reaction L-glutamyl-tRNA(Gln) + L-glutamine + ATP + H2O = L-glutaminyl-tRNA(Gln) + L-glutamate + ADP + phosphate + H(+). The catalysed reaction is L-aspartyl-tRNA(Asn) + L-glutamine + ATP + H2O = L-asparaginyl-tRNA(Asn) + L-glutamate + ADP + phosphate + 2 H(+). Its function is as follows. Allows the formation of correctly charged Asn-tRNA(Asn) or Gln-tRNA(Gln) through the transamidation of misacylated Asp-tRNA(Asn) or Glu-tRNA(Gln) in organisms which lack either or both of asparaginyl-tRNA or glutaminyl-tRNA synthetases. The reaction takes place in the presence of glutamine and ATP through an activated phospho-Asp-tRNA(Asn) or phospho-Glu-tRNA(Gln). In Rhizobium johnstonii (strain DSM 114642 / LMG 32736 / 3841) (Rhizobium leguminosarum bv. viciae), this protein is Aspartyl/glutamyl-tRNA(Asn/Gln) amidotransferase subunit B.